The sequence spans 1732 residues: Polycystin-1-like protein 3 (1732 aa).

Residues 1-23 (MFFKGGSWLWLYIRTSIILGSEL) form the signal peptide. At 24-697 (NSPAPHGQNN…IKLFLRVTNN (674 aa)) the chain is on the extracellular side. The region spanning 30–138 (GQNNCYQLNR…CLLKYYFICQ (109 aa)) is the C-type lectin domain. 2 disulfides stabilise this stretch: cysteine 51-cysteine 137 and cysteine 112-cysteine 129. N-linked (GlcNAc...) asparagine glycans are attached at residues asparagine 286, asparagine 363, asparagine 515, asparagine 537, and asparagine 575. The GAIN-B domain maps to 523–685 (TSLNMSTHQL…FVVPRTVNVE (163 aa)). 2 disulfides stabilise this stretch: cysteine 635-cysteine 663 and cysteine 650-cysteine 665. The GPS stretch occupies residues 635–685 (CYYWEIHNQTWSSAGCQVGPQSTILRTQCLCNHLTFFASDFFVVPRTVNVE). A helical transmembrane segment spans residues 698-718 (PVGVSLLASLLGFYVITVVWA). Over 719-905 (RKKDQADMQK…PWNQFTRVQR (187 aa)) the chain is Cytoplasmic. The 118-residue stretch at 743 to 860 (FHYLIQVYTG…GDCELDRVFI (118 aa)) folds into the PLAT domain. Residues 906–926 (LSCCMTLLLCNMVINVMFWKI) form a helical membrane-spanning segment. Topologically, residues 927-939 (NSTTAKRDEQMRP) are extracellular. The helical transmembrane segment at 940–960 (FAVAWSELLVSIHTAVILFPI) threads the bilayer. The Cytoplasmic segment spans residues 961-1154 (NLVIGRLFPL…ISNGLSKWLT (194 aa)). A helical transmembrane segment spans residues 1155-1175 (SVCWLLLGFTSLASAFFTALY). The Extracellular segment spans residues 1176–1198 (SLELSKDQATSWMISIILSVLQN). Residues 1199–1219 (IFISQPVKVVFFTFLYSLMMS) form a helical membrane-spanning segment. The Cytoplasmic segment spans residues 1220 to 1289 (RMPRLNKENE…KLTGDILVQI (70 aa)). A helical membrane pass occupies residues 1290–1300 (LFLTLLMTAIY). The Extracellular segment spans residues 1301-1461 (SAKNSNRFYL…SFTSLQMSKK (161 aa)). A helical membrane pass occupies residues 1462-1491 (GCVWSIISQVIYYLLVCYYAFIQGCQLKQQ). At 1492 to 1500 (KWRFFTGKR) the chain is on the cytoplasmic side. The helical transmembrane segment at 1501–1519 (NILDTSIILISFILLGLDM) threads the bilayer. The Extracellular segment spans residues 1520-1550 (KSISLHKKNMARYRDDQDRFISFYEAVKVNS). A helical membrane pass occupies residues 1551–1572 (AATHLVGFPVLLATVQLWNLLR). Topologically, residues 1573–1589 (HSPRLRVISRTLSRAWD) are cytoplasmic. Residues 1590-1614 (EVVGFLLIILILLTGYAIAFNLLFG) traverse the membrane as a helical segment. Residues 1613-1651 (FGCSISDYRTFFSSAVTVVGLLMGISHQEEVFALDPVLG) are channel pore-region. Residues 1615–1647 (CSISDYRTFFSSAVTVVGLLMGISHQEEVFALD) lie on the Extracellular side of the membrane. Residues 1648-1667 (PVLGTFLILTSVILMVLVVI) traverse the membrane as a helical segment. At 1668–1732 (NLFVSAILMA…SDTEVLDELP (65 aa)) the chain is on the cytoplasmic side.

The protein belongs to the polycystin family. Heterotetramer with PKD2L1, composed of 3 subunit of PKD2L1 and 1 subunit of PKD1L3. Post-translationally, autoproteolytically processed at the GPS region of the GAIN-B domain; this cleavage modulates receptor activity. In terms of tissue distribution, highly expressed in placenta, weakly in heart and lung.

It is found in the cell membrane. The enzyme catalyses Ca(2+)(in) = Ca(2+)(out). It carries out the reaction Na(+)(in) = Na(+)(out). It catalyses the reaction K(+)(in) = K(+)(out). The catalysed reaction is Mg(2+)(in) = Mg(2+)(out). Its activity is regulated as follows. The non-selective cation channel is gated following an off-response property by acid: gated open after the removal of acid stimulus, but not during acid application. Regulation of non-selective cation channel activity by external Ca(2+) is bimodal, first sensitizing and subsequently inactivating the current. Its function is as follows. Pore-forming subunit of a heterotetrameric, non-selective cation channel that is permeable to Ca(2+). Also shows permeability towards NA(1+), K(+) and Mg(2+). Heterotetrameric complex channel is activated by external low pH and Ca(2+), but opens only when the extracellular pH rises again and after the removal of acid stimulus. May act as a sour taste receptor in gustatory cells; however, its contribution to sour taste perception is unclear in vivo and may be indirect. This is Polycystin-1-like protein 3 from Homo sapiens (Human).